We begin with the raw amino-acid sequence, 88 residues long: Large ribosomal subunit protein eL37 (88 aa).

The segment at 1-24 (MTKGTTSFGKRHNKSHTQCRRCGR) is disordered. Positions 9 to 24 (GKRHNKSHTQCRRCGR) are enriched in basic residues. Residues Cys19, Cys22, Cys34, and Cys37 each contribute to the Zn(2+) site. The C4-type zinc finger occupies 19 to 37 (CRRCGRKSYHIQKKTCSSC).

It belongs to the eukaryotic ribosomal protein eL37 family. Requires Zn(2+) as cofactor.

Its function is as follows. Binds to the 23S rRNA. This chain is Large ribosomal subunit protein eL37 (RPL37), found in Schistosoma mansoni (Blood fluke).